Consider the following 328-residue polypeptide: Probable voltage-gated potassium channel subunit beta (328 aa).

The NADP(+) site is built by Trp21, Gln27, and Asp49. The active-site Proton donor/acceptor is Tyr54. 14 residues coordinate NADP(+): Ser152, Gln178, Trp207, Ser208, Pro209, Leu210, Ala211, Lys218, Arg229, Gly285, Thr287, Gln291, Glu294, and Asn295.

It belongs to the shaker potassium channel beta subunit family. As to quaternary structure, forms heteromultimeric complexes with potassium channel alpha subunits. Expressed in late-developed leaves with the highest expression in the flag leaf (at protein level).

Probable accessory potassium channel protein which modulates the activity of the pore-forming alpha subunit. This chain is Probable voltage-gated potassium channel subunit beta (KOB1), found in Oryza sativa subsp. japonica (Rice).